The sequence spans 324 residues: Glyoxylate/hydroxypyruvate reductase B (324 aa).

Residues Arg-237 and Glu-266 contribute to the active site. Residue His-285 is the Proton donor of the active site.

This sequence belongs to the D-isomer specific 2-hydroxyacid dehydrogenase family. GhrB subfamily. Homodimer.

Its subcellular location is the cytoplasm. The enzyme catalyses glycolate + NADP(+) = glyoxylate + NADPH + H(+). The catalysed reaction is (R)-glycerate + NAD(+) = 3-hydroxypyruvate + NADH + H(+). It carries out the reaction (R)-glycerate + NADP(+) = 3-hydroxypyruvate + NADPH + H(+). In terms of biological role, catalyzes the NADPH-dependent reduction of glyoxylate and hydroxypyruvate into glycolate and glycerate, respectively. The chain is Glyoxylate/hydroxypyruvate reductase B from Salmonella gallinarum (strain 287/91 / NCTC 13346).